The following is a 413-amino-acid chain: Multifunctional CCA protein (413 aa).

G8 and R11 together coordinate ATP. CTP-binding residues include G8 and R11. The Mg(2+) site is built by D21 and D23. R91, R137, and R140 together coordinate ATP. CTP is bound by residues R91, R137, and R140. Positions 225-326 (TGVHVMMVID…ANLLQGVDAY (102 aa)) constitute an HD domain.

It belongs to the tRNA nucleotidyltransferase/poly(A) polymerase family. Bacterial CCA-adding enzyme type 1 subfamily. In terms of assembly, monomer. Can also form homodimers and oligomers. Requires Mg(2+) as cofactor. The cofactor is Ni(2+).

The enzyme catalyses a tRNA precursor + 2 CTP + ATP = a tRNA with a 3' CCA end + 3 diphosphate. It catalyses the reaction a tRNA with a 3' CCA end + 2 CTP + ATP = a tRNA with a 3' CCACCA end + 3 diphosphate. Functionally, catalyzes the addition and repair of the essential 3'-terminal CCA sequence in tRNAs without using a nucleic acid template. Adds these three nucleotides in the order of C, C, and A to the tRNA nucleotide-73, using CTP and ATP as substrates and producing inorganic pyrophosphate. tRNA 3'-terminal CCA addition is required both for tRNA processing and repair. Also involved in tRNA surveillance by mediating tandem CCA addition to generate a CCACCA at the 3' terminus of unstable tRNAs. While stable tRNAs receive only 3'-terminal CCA, unstable tRNAs are marked with CCACCA and rapidly degraded. In Nitrosospira multiformis (strain ATCC 25196 / NCIMB 11849 / C 71), this protein is Multifunctional CCA protein.